We begin with the raw amino-acid sequence, 410 residues long: Arginine deiminase (410 aa).

C398 (amidino-cysteine intermediate) is an active-site residue.

Belongs to the arginine deiminase family. In terms of assembly, homodimer.

It is found in the cytoplasm. It carries out the reaction L-arginine + H2O = L-citrulline + NH4(+). It participates in amino-acid degradation; L-arginine degradation via ADI pathway; carbamoyl phosphate from L-arginine: step 1/2. The protein is Arginine deiminase (arcA) of Mycoplasmopsis arginini (Mycoplasma arginini).